The sequence spans 313 residues: Protein PALE CRESS, chloroplastic (313 aa).

The transit peptide at Met-1 to Ser-22 directs the protein to the chloroplast.

In terms of tissue distribution, expressed in green tissues, including leaves. Accumulates in chloroplasts of mature stomatal guard cells.

It localises to the plastid. Its subcellular location is the chloroplast. It is found in the chromoplast. The protein localises to the etioplast. The protein resides in the amyloplast. Required for the differentiation of chloroplast from proplastids or etioplasts, probably by modulating some chloroplast-encoded genes expression and mRNA maturation. Involved in leaf-cells differentiation. The chain is Protein PALE CRESS, chloroplastic (PAC) from Arabidopsis thaliana (Mouse-ear cress).